Here is a 73-residue protein sequence, read N- to C-terminus: uncharacterized protein (73 aa).

The signal sequence occupies residues 1 to 28; it reads MKFLLSVIAGLLILALYLFWKVQPPVWI.

This is an uncharacterized protein from Bacillus subtilis (strain 168).